A 471-amino-acid chain; its full sequence is 5-hydroxytryptamine receptor 2B (471 aa).

At 1 to 26 (MFQAAVGPLQTNISLPEETPGLELNW) the chain is on the extracellular side. N-linked (GlcNAc...) asparagine glycosylation occurs at N12. A helical membrane pass occupies residues 27-49 (AALLIVMVIIPTIGGNILVILAV). The Cytoplasmic portion of the chain corresponds to 50-60 (WLEKKLQNATN). Residues 61–83 (FFLMSLAVADLLVGLLVMPIALI) traverse the membrane as a helical segment. Topologically, residues 84 to 99 (TILYDSDWPLPEPLCP) are extracellular. The cysteines at positions 98 and 182 are disulfide-linked. A helical membrane pass occupies residues 100 to 121 (IWLFLDVLFSTASIMHLCAISL). The ergotamine site is built by D105 and T110. A DRY motif; important for ligand-induced conformation changes motif is present at residues 122–124 (DRY). At 122 to 141 (DRYIAIKKPIQHSQYKSRAK) the chain is on the cytoplasmic side. Residues 142–162 (VMLKIALVWLISICIAIPIPI) traverse the membrane as a helical segment. Over 163–191 (KGLRNYPHPNNITFTSNHTCVLKTDTFQE) the chain is Extracellular. Residues N173 and N179 are each glycosylated (N-linked (GlcNAc...) asparagine). L184 provides a ligand contact to ergotamine. Residues 187 to 190 (DTFQ) carry the [DE]RFG motif; may stabilize a conformation that preferentially activates signaling via beta-arrestin family members motif. Residues 192-214 (FIIFGSLVAFFIPLTIMMIIYFL) form a helical membrane-spanning segment. The Cytoplasmic segment spans residues 215 to 308 (TVRVLRKKVY…TLTNEQRASK (94 aa)). A helical transmembrane segment spans residues 309–329 (VLGIVFLLFVVMWCPFFITNI). At 330–344 (TSALCGPCDANIIGR) the chain is on the extracellular side. A disulfide bond links C334 and C337. The helical transmembrane segment at 345–366 (LMEIFSWVGYVSSGINPLVYTL) threads the bilayer. Residues 360–364 (NPLVY) carry the NPxxY motif; important for ligand-induced conformation changes and signaling motif. Residues 367 to 471 (FNKTFRQAFT…CKQEERVSCV (105 aa)) lie on the Cytoplasmic side of the membrane. C381 is lipidated: S-palmitoyl cysteine. Residues 469-471 (SCV) carry the PDZ-binding motif.

Belongs to the G-protein coupled receptor 1 family. As to expression, detected in brain, heart and gut.

The protein localises to the cell membrane. It localises to the synapse. The protein resides in the synaptosome. Functionally, G-protein coupled receptor for 5-hydroxytryptamine (serotonin). Also functions as a receptor for various ergot alkaloid derivatives and psychoactive substances. Ligand binding causes a conformation change that triggers signaling via guanine nucleotide-binding proteins (G proteins) and modulates the activity of downstream effectors. HTR2B is coupled to G(q)/G(11) G alpha proteins and activates phospholipase C-beta, releasing diacylglycerol (DAG) and inositol 1,4,5-trisphosphate (IP3) second messengers that modulate the activity of phosphatidylinositol 3-kinase and promote the release of Ca(2+) ions from intracellular stores, respectively. Beta-arrestin family members inhibit signaling via G proteins and mediate activation of alternative signaling pathways. Plays a role in the regulation of dopamine and 5-hydroxytryptamine release, 5-hydroxytryptamine uptake and in the regulation of extracellular dopamine and 5-hydroxytryptamine levels, and thereby affects neural activity. The sequence is that of 5-hydroxytryptamine receptor 2B (htr2b) from Dichotomyctere fluviatilis (Green pufferfish).